We begin with the raw amino-acid sequence, 243 residues long: Uridylate kinase (243 aa).

Residue 15 to 18 (KLSG) participates in ATP binding. The segment at 23-28 (GEEGFG) is involved in allosteric activation by GTP. Glycine 57 is a UMP binding site. The ATP site is built by glycine 58 and arginine 62. UMP-binding positions include aspartate 77 and 138 to 145 (TGNPFCTT). Residues threonine 165, tyrosine 171, and aspartate 174 each contribute to the ATP site.

It belongs to the UMP kinase family. In terms of assembly, homohexamer.

The protein resides in the cytoplasm. It carries out the reaction UMP + ATP = UDP + ADP. It participates in pyrimidine metabolism; CTP biosynthesis via de novo pathway; UDP from UMP (UMPK route): step 1/1. With respect to regulation, allosterically activated by GTP. Inhibited by UTP. Catalyzes the reversible phosphorylation of UMP to UDP. The protein is Uridylate kinase of Shewanella denitrificans (strain OS217 / ATCC BAA-1090 / DSM 15013).